A 617-amino-acid chain; its full sequence is uncharacterized protein (617 aa).

The chain crosses the membrane as a helical span at residues 103–123; it reads AGVLLAKFFPLLFLYPLTYLA. Residues 200–609 form the Protein kinase domain; the sequence is FETREPVGSG…DILEAAKPFL (410 aa). Residues 206–214 and lysine 302 contribute to the ATP site; that span reads VGSGCVAQV. The active-site Proton acceptor is the aspartate 436.

Belongs to the protein kinase superfamily. ADCK protein kinase family.

Its subcellular location is the mitochondrion. The protein localises to the membrane. Its function is as follows. The function of this protein is not yet clear. It is not known if it has protein kinase activity and what type of substrate it would phosphorylate (Ser, Thr or Tyr). Involved in the mitochondrial import of CoQ precursors, plays a role in muscle mitochondrial function and fatty acid beta-oxidation. This is an uncharacterized protein from Mus musculus (Mouse).